Reading from the N-terminus, the 353-residue chain is Protein RecA (353 aa).

An ATP-binding site is contributed by 67–74; that stretch reads GPESSGKT.

The protein belongs to the RecA family.

Its subcellular location is the cytoplasm. In terms of biological role, can catalyze the hydrolysis of ATP in the presence of single-stranded DNA, the ATP-dependent uptake of single-stranded DNA by duplex DNA, and the ATP-dependent hybridization of homologous single-stranded DNAs. It interacts with LexA causing its activation and leading to its autocatalytic cleavage. This is Protein RecA from Salmonella paratyphi A (strain ATCC 9150 / SARB42).